The following is a 151-amino-acid chain: UPF0208 membrane protein YfbV (151 aa).

2 helical membrane-spanning segments follow: residues 46 to 65 and 69 to 91; these read YAIRFMPPIAVFTLCWQIAL and LGPAVATALFALSLPMQGLWWLG.

This sequence belongs to the UPF0208 family.

The protein resides in the cell inner membrane. In Escherichia coli O1:K1 / APEC, this protein is UPF0208 membrane protein YfbV.